The following is a 156-amino-acid chain: Probable cyclic pyranopterin monophosphate synthase (156 aa).

Residues 73–75 and 109–110 each bind substrate; these read MCH and ME. The active site involves aspartate 124.

The protein belongs to the MoaC family. In terms of assembly, homohexamer; trimer of dimers.

The catalysed reaction is (8S)-3',8-cyclo-7,8-dihydroguanosine 5'-triphosphate = cyclic pyranopterin phosphate + diphosphate. It participates in cofactor biosynthesis; molybdopterin biosynthesis. In terms of biological role, catalyzes the conversion of (8S)-3',8-cyclo-7,8-dihydroguanosine 5'-triphosphate to cyclic pyranopterin monophosphate (cPMP). In Archaeoglobus fulgidus (strain ATCC 49558 / DSM 4304 / JCM 9628 / NBRC 100126 / VC-16), this protein is Probable cyclic pyranopterin monophosphate synthase.